We begin with the raw amino-acid sequence, 666 residues long: MSKHVEQLAVNTIRTLSIDSVEKANSGHPGMPMGAAPMAFCLWTKFMNHNPANPDWVNRDRFVLSAGHGSMLLYSLLHLTGYDLSLEELQNFRQWGSKTPGHPEYGHTPGVEATTGPLGQGVAMAVGMAMAERHLAATYNRDGYNIVDHYTYTICGDGDLMEGVSAEAASLAGHLKLGRMILLYDSNDISLDGDLHHSFSESVEDRFKAYGWHVVRVEDGNNLDEIAKAIEEAKADERPSLIEVKTTIGFGSPNKGGKSVSHGAPLGADEVKLTKEAYEWTYENEFHIPEEVAAYYEQVKQQGAEKEESWNELFAQYKKAYPELASQFELAVHGDLPEGWDAVAPSYEVGKSVATRSSSGEALNAFAKTVPQLFGGSADLASSNKTLIKGEANFSRDDYSGRNVWFGVREFAMGAAMNGMALHGGLKVFGATFFVFSDYLRPAIRLAALMQLPVIYVFTHDSIAVGEDGPTHEPVEQLASLRAMPGLSVIRPADGNESVAAWKLALESKDQPTALVLSRQNLPTLEGAVDRAYDGVSKGAYVLAPANGSADLLLLASGSEVSLAVNAKEALEKEGIHAAVVSMPSWDRFEAQSAEYKEEVLPSDVTARLAIEMGSSLGWAKYVGNQGDVVAIDRFGASAPGERIMEEFGFTVQHVVARAKALLENK.

Histidine 28 provides a ligand contact to substrate. Residues histidine 68 and 116–118 (GPL) contribute to the thiamine diphosphate site. Residue aspartate 157 participates in Mg(2+) binding. Thiamine diphosphate contacts are provided by glycine 158 and asparagine 187. The Mg(2+) site is built by asparagine 187 and isoleucine 189. Histidine 262, arginine 356, and serine 383 together coordinate substrate. Histidine 262 contributes to the thiamine diphosphate binding site. The active-site Proton donor is glutamate 410. A thiamine diphosphate-binding site is contributed by phenylalanine 436. The substrate site is built by histidine 460, aspartate 468, and arginine 519.

This sequence belongs to the transketolase family. In terms of assembly, homodimer. The cofactor is Mg(2+). It depends on Ca(2+) as a cofactor. Mn(2+) is required as a cofactor. Requires Co(2+) as cofactor. Thiamine diphosphate serves as cofactor.

It catalyses the reaction D-sedoheptulose 7-phosphate + D-glyceraldehyde 3-phosphate = aldehydo-D-ribose 5-phosphate + D-xylulose 5-phosphate. Its function is as follows. Catalyzes the transfer of a two-carbon ketol group from a ketose donor to an aldose acceptor, via a covalent intermediate with the cofactor thiamine pyrophosphate. The protein is Transketolase (tkt) of Halalkalibacterium halodurans (strain ATCC BAA-125 / DSM 18197 / FERM 7344 / JCM 9153 / C-125) (Bacillus halodurans).